A 239-amino-acid chain; its full sequence is Ribosomal RNA small subunit methyltransferase G (239 aa).

S-adenosyl-L-methionine contacts are provided by residues glycine 78, phenylalanine 83, 129–130 (AE), and arginine 148.

The protein belongs to the methyltransferase superfamily. RNA methyltransferase RsmG family.

The protein localises to the cytoplasm. Its function is as follows. Specifically methylates the N7 position of a guanine in 16S rRNA. The chain is Ribosomal RNA small subunit methyltransferase G from Clostridium botulinum (strain Alaska E43 / Type E3).